The primary structure comprises 708 residues: WD repeat-containing and planar cell polarity effector protein fritz homolog (708 aa).

WD repeat units follow at residues proline 303 to alanine 342 and glutamine 343 to glutamine 382.

The protein belongs to the WD repeat fritz family. Interacts with sept2-a. Interacts with intu and fuz; fuz, intu and wdpcp probably form the core CPLANE (ciliogenesis and planar polarity effectors) complex.

The protein localises to the cell membrane. The protein resides in the cytoplasm. It is found in the cytoskeleton. Its subcellular location is the cilium axoneme. It localises to the cilium basal body. Probable effector of the planar cell polarity signaling pathway which regulates the septin cytoskeleton in both ciliogenesis and collective cell movements including covergent extension during gastrulation. Controls cell shape but not polarization during convergent extension. Proposed to function as core component of the CPLANE (ciliogenesis and planar polarity effectors) complex involved in the recruitment of peripheral IFT-A proteins to basal bodies. This chain is WD repeat-containing and planar cell polarity effector protein fritz homolog (wdpcp), found in Xenopus laevis (African clawed frog).